Reading from the N-terminus, the 212-residue chain is uncharacterized protein (212 aa).

One can recognise an SIS domain in the interval 46-198 (LERVYREKRK…IYSLMTRLGI (153 aa)).

The protein belongs to the SIS family. PHI subfamily.

This is an uncharacterized protein from Aeropyrum pernix (strain ATCC 700893 / DSM 11879 / JCM 9820 / NBRC 100138 / K1).